A 127-amino-acid polypeptide reads, in one-letter code: UPF0102 protein Geob_1494 (127 aa).

Belongs to the UPF0102 family.

The sequence is that of UPF0102 protein Geob_1494 from Geotalea daltonii (strain DSM 22248 / JCM 15807 / FRC-32) (Geobacter daltonii).